Reading from the N-terminus, the 487-residue chain is 2-aminomuconic semialdehyde dehydrogenase (487 aa).

Residue Gly231–Ala236 coordinates NAD(+). The active-site Proton acceptor is the Glu253. Catalysis depends on Cys287, which acts as the Nucleophile.

This sequence belongs to the aldehyde dehydrogenase family.

Its subcellular location is the cytoplasm. The catalysed reaction is 2-aminomuconate 6-semialdehyde + NAD(+) + H2O = (2Z,4E)-2-aminomuconate + NADH + 2 H(+). Its pathway is amino-acid degradation; L-kynurenine degradation. Functionally, catalyzes the NAD-dependent oxidation of 2-aminomuconic semialdehyde of the kynurenine metabolic pathway in L-tryptophan degradation. This chain is 2-aminomuconic semialdehyde dehydrogenase (ALDH8A1), found in Bos taurus (Bovine).